Reading from the N-terminus, the 1052-residue chain is Mediator of RNA polymerase II transcription subunit 5 (1052 aa).

The segment at G949–N982 is disordered. The segment covering Q959–Q970 has biased composition (low complexity).

It belongs to the Mediator complex subunit 5 family. Component of the Mediator complex.

The protein resides in the nucleus. Its function is as follows. Component of the Mediator complex, a coactivator involved in the regulated transcription of nearly all RNA polymerase II-dependent genes. Mediator functions as a bridge to convey information from gene-specific regulatory proteins to the basal RNA polymerase II transcription machinery. Mediator is recruited to promoters by direct interactions with regulatory proteins and serves as a scaffold for the assembly of a functional preinitiation complex with RNA polymerase II and the general transcription factors. The chain is Mediator of RNA polymerase II transcription subunit 5 (NUT1) from Coccidioides immitis (strain RS) (Valley fever fungus).